A 527-amino-acid chain; its full sequence is ARS-binding protein 2 (527 aa).

Disordered stretches follow at residues 160-184, 219-265, and 282-344; these read PDVN…HSAS, SHHM…NSHN, and IDPD…IKRL. The span at 164-177 shows a compositional bias: low complexity; the sequence is SSSISTMRTSTSPS. Positions 225-239 are enriched in polar residues; it reads RGSQQAHQTTPQNHS. Residues 284–303 show a composition bias toward basic and acidic residues; that stretch reads PDWHQWPDDLRDVSSPKESD. 3 positions are modified to phosphoserine: serine 297, serine 298, and serine 302. Residues 328-343 are compositionally biased toward basic residues; that stretch reads PRKRGRPPGARNKIKR.

The protein localises to the nucleus. Binds, preferentially, to the Maundrell ARS consensus sequence within ARS3002. The chain is ARS-binding protein 2 (abp2) from Schizosaccharomyces pombe (strain 972 / ATCC 24843) (Fission yeast).